A 473-amino-acid chain; its full sequence is Cholesterol 22-monohydroxylase CYP90B52 (473 aa).

A helical transmembrane segment spans residues 2-22 (EGLLLLLPTAIIALYLYISLI). Cys-422 serves as a coordination point for heme.

This sequence belongs to the cytochrome P450 family. As to expression, mainly expressed in leaves and roots and, at low levels, in fruits and stems.

It localises to the membrane. It carries out the reaction cholesterol + reduced [NADPH--hemoprotein reductase] + O2 = (22S)-22-hydroxycholesterol + oxidized [NADPH--hemoprotein reductase] + H2O + H(+). It participates in steroid metabolism; cholesterol metabolism. In terms of biological role, canonical brassinosteroid (BR)-biosynthetic enzyme capable of converting cholesterol to 22S-hydroxycholesterol via sterol-C22 hydroxylation. This is Cholesterol 22-monohydroxylase CYP90B52 from Paris polyphylla (Daiswa polyphylla).